Reading from the N-terminus, the 485-residue chain is NADH-quinone oxidoreductase subunit N (485 aa).

The next 14 helical transmembrane spans lie at 8–28, 35–55, 71–91, 105–125, 127–147, 159–179, 203–223, 235–255, 271–291, 297–317, 326–346, 373–393, 408–430, and 455–475; these read LIAL…MLSI, FLNA…LWFV, GFAM…CTFA, FYLL…ANHL, ALFL…GYAF, YTIL…LVYA, LLAG…LVPF, PAPV…GVVM, VVLG…ALSQ, LLGY…IALQ, VGVY…VVSL, AAVM…LGFI, WWLV…RVAV, and IVVL…QPLI.

This sequence belongs to the complex I subunit 2 family. In terms of assembly, NDH-1 is composed of 13 different subunits. Subunits NuoA, H, J, K, L, M, N constitute the membrane sector of the complex.

It is found in the cell inner membrane. The catalysed reaction is a quinone + NADH + 5 H(+)(in) = a quinol + NAD(+) + 4 H(+)(out). Its function is as follows. NDH-1 shuttles electrons from NADH, via FMN and iron-sulfur (Fe-S) centers, to quinones in the respiratory chain. The immediate electron acceptor for the enzyme in this species is believed to be ubiquinone. Couples the redox reaction to proton translocation (for every two electrons transferred, four hydrogen ions are translocated across the cytoplasmic membrane), and thus conserves the redox energy in a proton gradient. The polypeptide is NADH-quinone oxidoreductase subunit N (Salmonella dublin (strain CT_02021853)).